The primary structure comprises 544 residues: CTP synthase (544 aa).

The tract at residues 1–266 (MKYIFVTGGV…GKAVEELLGL (266 aa)) is amidoligase domain. Ser-12 serves as a coordination point for CTP. Ser-12 serves as a coordination point for UTP. 13–18 (SLGKGV) is a binding site for ATP. L-glutamine is bound at residue Tyr-53. Asp-70 lines the ATP pocket. Asp-70 and Glu-140 together coordinate Mg(2+). CTP is bound by residues 147–149 (DIE), 187–192 (KTKPTQ), and Lys-223. UTP is bound by residues 187 to 192 (KTKPTQ) and Lys-223. Residues 291–544 (TIAIAGKYTA…VKAALEHQQQ (254 aa)) enclose the Glutamine amidotransferase type-1 domain. Gly-356 contacts L-glutamine. Catalysis depends on Cys-383, which acts as the Nucleophile; for glutamine hydrolysis. L-glutamine-binding positions include 384–387 (LGMQ), Glu-407, and Arg-467. Catalysis depends on residues His-517 and Glu-519.

It belongs to the CTP synthase family. As to quaternary structure, homotetramer.

The catalysed reaction is UTP + L-glutamine + ATP + H2O = CTP + L-glutamate + ADP + phosphate + 2 H(+). The enzyme catalyses L-glutamine + H2O = L-glutamate + NH4(+). It carries out the reaction UTP + NH4(+) + ATP = CTP + ADP + phosphate + 2 H(+). Its pathway is pyrimidine metabolism; CTP biosynthesis via de novo pathway; CTP from UDP: step 2/2. Allosterically activated by GTP, when glutamine is the substrate; GTP has no effect on the reaction when ammonia is the substrate. The allosteric effector GTP functions by stabilizing the protein conformation that binds the tetrahedral intermediate(s) formed during glutamine hydrolysis. Inhibited by the product CTP, via allosteric rather than competitive inhibition. Catalyzes the ATP-dependent amination of UTP to CTP with either L-glutamine or ammonia as the source of nitrogen. Regulates intracellular CTP levels through interactions with the four ribonucleotide triphosphates. This Deinococcus radiodurans (strain ATCC 13939 / DSM 20539 / JCM 16871 / CCUG 27074 / LMG 4051 / NBRC 15346 / NCIMB 9279 / VKM B-1422 / R1) protein is CTP synthase.